Here is a 91-residue protein sequence, read N- to C-terminus: Small ribosomal subunit protein uS15 (91 aa).

The protein belongs to the universal ribosomal protein uS15 family. In terms of assembly, part of the 30S ribosomal subunit. Forms a bridge to the 50S subunit in the 70S ribosome, contacting the 23S rRNA.

One of the primary rRNA binding proteins, it binds directly to 16S rRNA where it helps nucleate assembly of the platform of the 30S subunit by binding and bridging several RNA helices of the 16S rRNA. In terms of biological role, forms an intersubunit bridge (bridge B4) with the 23S rRNA of the 50S subunit in the ribosome. The protein is Small ribosomal subunit protein uS15 of Nautilia profundicola (strain ATCC BAA-1463 / DSM 18972 / AmH).